We begin with the raw amino-acid sequence, 458 residues long: Riboflavin transporter 2 (458 aa).

5 helical membrane passes run 11–31 (LFGM…PLIV), 38–58 (WYLP…PLFV), 73–93 (PVIY…AFFW), 97–117 (VPLA…LLSV), and 146–166 (GVSG…VVHC). N-linked (GlcNAc...) asparagine glycans are attached at residues N168, N176, N182, and N199. Residues 204-224 (VFFLFLSAMMVVCLAAFLLLN) form a helical membrane-spanning segment. The tract at residues 249–274 (DQALSLSHRPQEEKPMISSPDSHRRA) is disordered. 5 helical membrane passes run 279–299 (FGTG…LAWV), 325–345 (LAAT…MFLP), 349–369 (LVLI…IMAM), 388–408 (IVIA…IIGV), and 417–437 (ALVW…LSMF).

This sequence belongs to the riboflavin transporter family.

Its subcellular location is the cell membrane. The catalysed reaction is riboflavin(in) = riboflavin(out). Functionally, plasma membrane transporter mediating the uptake by cells of the water soluble vitamin B2/riboflavin that plays a key role in biochemical oxidation-reduction reactions of the carbohydrate, lipid, and amino acid metabolism. This is Riboflavin transporter 2 (rft2) from Salmo salar (Atlantic salmon).